The following is a 309-amino-acid chain: Vomeronasal type-1 receptor 46 (309 aa).

Over 1 to 20 (MNKANIFCTDTNMKVILFSE) the chain is Extracellular. The helical transmembrane segment at 21–41 (VSVGISANSILFISHLCMFLG) threads the bilayer. Residues 42 to 50 (ESRPKPIDL) are Cytoplasmic-facing. A helical transmembrane segment spans residues 51-71 (YIAFFSLTHLMLLVTMGLIAV). Residues 72–85 (DMFMPGGRWDSTTC) are Extracellular-facing. The cysteines at positions 85 and 171 are disulfide-linked. Residues 86–106 (TFLMYLHIVLRGPTLCATCLL) traverse the membrane as a helical segment. Residues 107-134 (NVLWTITLSPRNSCLTKFKHKSPHHISG) are Cytoplasmic-facing. Residues 135–155 (AFLFLCVLYMSLSSELLSITA) form a helical membrane-spanning segment. The Extracellular segment spans residues 156–192 (SLNLTSENFLYVSQSCSILPMSYSIKSMFSTKMAIRE). The N-linked (GlcNAc...) asparagine glycan is linked to asparagine 158. A helical membrane pass occupies residues 193-213 (AFLIGLMVLSSGYMVALLWSH). The Cytoplasmic segment spans residues 214–237 (KKQAQHLHSNSLSLKASPEQRATR). Residues 238 to 258 (TIMLLMSFFVVFYILDSVIFY) form a helical membrane-spanning segment. Residues 259–267 (SRMKFKDDS) lie on the Extracellular side of the membrane. The helical transmembrane segment at 268–288 (IFVCVQIIVSHSYVTVSPFVF) threads the bilayer. At 289-309 (ICTEKHIIKFFWSLCGRIVNI) the chain is on the cytoplasmic side.

It belongs to the G-protein coupled receptor 1 family.

The protein localises to the cell membrane. Putative pheromone receptor implicated in the regulation of social and reproductive behavior. This chain is Vomeronasal type-1 receptor 46 (Vmn1r46), found in Mus musculus (Mouse).